A 597-amino-acid polypeptide reads, in one-letter code: 66 kDa protein (597 aa).

Disordered regions lie at residues 62-82 (VRLQ…PSLQ), 160-198 (HSVP…FRQH), 218-315 (NQLA…SCRV), 329-411 (HFKS…LHHD), and 535-586 (SSPQ…ASAL). Positions 64–80 (LQSSPPRGPQSDRNLPS) are enriched in polar residues. The segment covering 218-234 (NQLAQAQQHPLPSSKPL) has biased composition (polar residues). Residues 273–291 (PSSRGHLPSSTSSSSPRSN) show a composition bias toward low complexity. Polar residues predominate over residues 305 to 315 (SNSQDLRSCRV). The segment covering 389 to 400 (QTHHARLPHSKR) has biased composition (basic residues). Over residues 535 to 574 (SSPQSHSSESLRGDSPPSSHLPSSPSSACSGDSFASCSSF) the composition is skewed to low complexity. The span at 575 to 584 (GPSNPTSSAS) shows a compositional bias: polar residues.

The protein belongs to the tymoviridae protein p69 family.

The polypeptide is 66 kDa protein (Ononis).